Reading from the N-terminus, the 569-residue chain is Beta-galactoside-specific lectin 3 (569 aa).

The N-terminal stretch at 1 to 33 is a signal peptide; the sequence is MNAVMDSRGAWVSCFLILGLVFGATVKAETKFS. Residue Glu198 is part of the active site. Intrachain disulfides connect Cys280-Cys311, Cys327-Cys346, and Cys370-Cys387. A propeptide spans 288–307 (connecting peptide); sequence EVRYWPLVIRPVLENSGAVD. Positions 314 to 441 constitute a Ricin B-type lectin 1 domain; the sequence is SEPTVRIVGR…YSLGQGWLAG (128 aa). 329–331 is a D-galactose binding site; the sequence is DVR. N-linked (GlcNAc...) asparagine glycosylation is found at Asn402 and Asn442. The Ricin B-type lectin 2 domain maps to 445–568; it reads APREVTIYGF…GNPNQMWLPV (124 aa). 2 disulfide bridges follow: Cys458–Cys471 and Cys497–Cys514. 541-543 lines the D-galactose pocket; the sequence is DVA.

It belongs to the ribosome-inactivating protein family. Type 2 RIP subfamily. In terms of assembly, disulfide-linked dimer of A and B chains.

The catalysed reaction is Endohydrolysis of the N-glycosidic bond at one specific adenosine on the 28S rRNA.. In terms of biological role, the A chain is responsible for inhibiting protein synthesis through the catalytic inactivation of 60S ribosomal subunits by removing adenine from position 4,324 of 28S rRNA. The B chain binds to cell receptors and probably facilitates the entry into the cell of the A chain; B chains are also responsible for cell agglutination (lectin activity). Inhibits growth of the human tumor cell line Molt4. The sequence is that of Beta-galactoside-specific lectin 3 from Viscum album (European mistletoe).